A 565-amino-acid chain; its full sequence is MTAAHKQKAKLLAWLKLILWGDSISQRIFHFYIYCILLGAVLLFLPFALKTDYQKVISYEVDLQGHTISKQTASYGFLDALFLAVSAFSDTGLSTTVVSETYSVFGQTVLAILLQLGGIGFVVIAFLVWRLFKLHKKGKYSFYEKLMLQSERGGSKLGTTSEMIVVSVLFLFMVELLYGFLYTILFYFIPAFESASVFQSSGKVSNQLKALIVDSTKRLPVVHNLNLAFQYGFFHSLSAVNNAGIDLLGANSFAPYRTNWGIVIQWLAISQIIFGGIGYPVLFDAYEAIKKRRLYGKYYKHQFSLFTKLAVLTNLIVTAWCFLMLLMVEFIVITSLTNTIAHLNVEKAYLVEGLKNKSNQELQSLIFGPIPAASRVMQLWFGVISSRSAGFSVFPWSAESDIIKGIMVIAMFIGGSPSSTAGGIRTTTLAVIFLTLKAKFRGQKEVKVFKRSIDGQTVINAFLVAVFGLVSVVLIAILLPLSMQQPLSFVDSLFETTSAFGTVGLSSGATKIMALEPTRNLFNYLTLGLLMIMGQVGVSSSVLTFVKKHPQGNSFSYPREDVKVG.

10 helical membrane-spanning segments follow: residues 28–48 (IFHF…LPFA), 73–93 (ASYG…DTGL), 109–129 (VLAI…FLVW), 169–189 (LFLF…FYFI), 262–282 (IVIQ…YPVL), 315–335 (LIVT…VITS), 364–384 (SLIF…FGVI), 393–413 (VFPW…AMFI), 461–481 (AFLV…LLPL), and 526–546 (TLGL…LTFV).

This sequence belongs to the TrkH potassium transport family.

It localises to the cell membrane. This is an uncharacterized protein from Mycoplasma pneumoniae (strain ATCC 29342 / M129 / Subtype 1) (Mycoplasmoides pneumoniae).